The sequence spans 468 residues: Zinc transporter SLC39A7 (468 aa).

A helical transmembrane segment spans residues 10-30 (WVAVGLLTWAALGLLVAGHEG). Composition is skewed to basic and acidic residues over residues 36 to 56 (RDVEEDFHGHSHGHSHEDFHH) and 64 to 100 (HTHESIWHGHAHSHDHGHSREDVHHGHSHGHSHDSLH). The disordered stretch occupies residues 36-116 (RDVEEDFHGH…SHGASREAGA (81 aa)). A Pros-methylhistidine modification is found at histidine 64. The next 3 membrane-spanning stretches (helical) occupy residues 132–152 (ALGATVLISAAPFFVLFLIPV), 163–183 (LQILLSFASGGLLGDAFLHLI), and 208–228 (GPILSVGLWVLSGIVAFLVVE). Positions 237–248 (GHGHAHAHGHGH) are enriched in basic residues. Residues 237 to 313 (GHGHAHAHGH…NPEEEKTGSD (77 aa)) form a disordered region. Positions 249-312 (SHGDSHAHGH…QNPEEEKTGS (64 aa)) are enriched in basic and acidic residues. A run of 3 helical transmembrane segments spans residues 385–405 (LTAIGALAGTACALLTEGGAV), 409–429 (VAGGAGPGWVLPFTAGGFIYV), and 447–467 (SLLEVLGLLGGVAMMVLIAHL).

The protein belongs to the ZIP transporter (TC 2.A.5) family. KE4/Catsup subfamily. As to quaternary structure, homodimer. Rapidly phosphorylated by CK2 following Zn(2+) treatment. This phosphorylation is required for efficient cytosolic Zn(2+) release.

It localises to the endoplasmic reticulum membrane. Its subcellular location is the golgi apparatus. It is found in the cis-Golgi network membrane. The enzyme catalyses Zn(2+)(in) = Zn(2+)(out). In terms of biological role, transports Zn(2+) from the endoplasmic reticulum (ER)/Golgi apparatus to the cytosol, playing an essential role in the regulation of cytosolic zinc levels. Acts as a gatekeeper of zinc release from intracellular stores, requiring post-translational activation by phosphorylation on residues, resulting in activation of multiple downstream pathways leading to cell growth and proliferation. Has an essential role in B cell development and is required for proper B cell receptor signaling. Plays an important role in maintaining intestinal epithelial homeostasis and skin dermis development by regulating ER function. Controls cell signaling pathways involved in glucose metabolism in skeletal muscle. Has a protective role against ER stress in different biological contexts. Mediates Zn(2+)-induced ferroptosis. The chain is Zinc transporter SLC39A7 from Rattus norvegicus (Rat).